A 760-amino-acid polypeptide reads, in one-letter code: E4 SUMO-protein ligase PIAL2 (760 aa).

Positions Ile-143–Asp-301 are interacting domain (IND), required for interaction with MOM1 and PIAL1. The segment at Pro-298–His-379 adopts an SP-RING-type zinc-finger fold. Residues Cys-329, His-331, Cys-352, and Cys-355 each contribute to the Zn(2+) site. Basic and acidic residues predominate over residues Gly-440–Cys-450. 4 disordered regions span residues Gly-440 to Asp-471, Leu-492 to Asp-522, Gly-631 to Arg-657, and Ser-699 to Ser-760. Polar residues-rich tracts occupy residues Leu-492–Pro-518, Gly-631–Gln-653, and Ser-699–Thr-729.

It belongs to the PIAL protein ligase family. In terms of assembly, homodimer. Interacts with MOM1 and PIAL1 to form a high molecular mass complex which mediates transcriptional silencing at heterochromatin regions. Expressed in leaves, stems and flowers, and, at low levels, in siliques and old leaves.

The protein localises to the nucleus. It participates in protein modification; protein sumoylation. Together with MOM1 and PIAL1, regulates transcriptional gene silencing (TGS) independently of changes in DNA methylation. E4-type SUMO ligase that promotes SUMO chain formation in a SCE1-dependent manner and thus contributes to a pathway for proteolytic removal of sumoylation substrates. Involved in stress responses and sulfur metabolism. The protein is E4 SUMO-protein ligase PIAL2 of Arabidopsis thaliana (Mouse-ear cress).